Reading from the N-terminus, the 307-residue chain is Solute carrier family 25 member 53 (307 aa).

The disordered stretch occupies residues 1 to 23 (MGEQNHSPGKELQHRTRAEAPGK). The span at 8–22 (PGKELQHRTRAEAPG) shows a compositional bias: basic and acidic residues. Solcar repeat units lie at residues 25–105 (SWHS…LLCF), 112–202 (HTLG…IQDG), and 210–302 (HWVP…HSRK). Transmembrane regions (helical) follow at residues 31-51 (YALGAVSNFMSTFLTFPIYKV), 82-102 (YPPLLSKTLQGTLLFGTYDSL), 112-132 (HTLGHRWAAGLMSGVVEAVAL), 181-201 (VLARNSLGSALYFSFKDPIQD), 215-235 (LVSGSVNGTITCLVLYPLIVL), and 269-290 (IYRGGSLVILRSSVTWGLTTAI).

Belongs to the mitochondrial carrier (TC 2.A.29) family.

The protein localises to the mitochondrion inner membrane. The polypeptide is Solute carrier family 25 member 53 (SLC25A53) (Homo sapiens (Human)).